The chain runs to 20 residues: 23 kDa cell wall protein (20 aa).

It is found in the secreted. Its subcellular location is the cell wall. The sequence is that of 23 kDa cell wall protein from Solanum lycopersicum (Tomato).